We begin with the raw amino-acid sequence, 513 residues long: Na(+)/H(+) antiporter NhaB (513 aa).

The next 12 helical transmembrane spans lie at 23–43, 52–72, 97–117, 120–140, 144–164, 202–222, 238–258, 303–323, 348–368, 391–411, 447–467, and 475–495; these read LALI…PFVA, IFTL…LLAI, LLLM…LFIF, LLLS…AAAF, FLDA…FYGI, LMMH…VGEP, FFLR…LTCL, AIIG…VGLI, TESL…AVII, LFYI…VGTI, ATPN…APLI, and VWMA…CVEF.

Belongs to the NhaB Na(+)/H(+) (TC 2.A.34) antiporter family.

It localises to the cell inner membrane. The catalysed reaction is 2 Na(+)(in) + 3 H(+)(out) = 2 Na(+)(out) + 3 H(+)(in). Na(+)/H(+) antiporter that extrudes sodium in exchange for external protons. The protein is Na(+)/H(+) antiporter NhaB of Escherichia coli O6:K15:H31 (strain 536 / UPEC).